Consider the following 290-residue polypeptide: Nucleotide-binding protein FN1089 (290 aa).

11–18 lines the ATP pocket; it reads GLSGAGKT. 56–59 is a binding site for GTP; that stretch reads DIRT.

The protein belongs to the RapZ-like family.

Displays ATPase and GTPase activities. The protein is Nucleotide-binding protein FN1089 of Fusobacterium nucleatum subsp. nucleatum (strain ATCC 25586 / DSM 15643 / BCRC 10681 / CIP 101130 / JCM 8532 / KCTC 2640 / LMG 13131 / VPI 4355).